Reading from the N-terminus, the 320-residue chain is Phospho-N-acetylmuramoyl-pentapeptide-transferase (320 aa).

10 helical membrane passes run 7-27 (ILAIIISFLIVLIVMPIVIPF), 50-70 (GTPTMGGLVIGLAIIVTSLIF), 77-97 (IGAPLIATVAFGLIGFIDDFI), 113-133 (LVLQFLISITFLYVIQKHLGS), 148-168 (WAYVPVMSVLMVFTVNAVNLT), 173-193 (GLASGVTMIVSLFLAIISIFS), 198-216 (MAIFSGAIVGSCMGFLRYN), 221-241 (VVFMGDTGSLMLGGSIFAIAV), 247-267 (VLVLVIGGLYIIEAVSVMLQV), and 297-317 (VVVVFWIFTILFCLLALAMIQ).

This sequence belongs to the glycosyltransferase 4 family. MraY subfamily. Requires Mg(2+) as cofactor.

The protein localises to the cell membrane. It carries out the reaction UDP-N-acetyl-alpha-D-muramoyl-L-alanyl-gamma-D-glutamyl-meso-2,6-diaminopimeloyl-D-alanyl-D-alanine + di-trans,octa-cis-undecaprenyl phosphate = di-trans,octa-cis-undecaprenyl diphospho-N-acetyl-alpha-D-muramoyl-L-alanyl-D-glutamyl-meso-2,6-diaminopimeloyl-D-alanyl-D-alanine + UMP. The protein operates within cell wall biogenesis; peptidoglycan biosynthesis. Its function is as follows. Catalyzes the initial step of the lipid cycle reactions in the biosynthesis of the cell wall peptidoglycan: transfers peptidoglycan precursor phospho-MurNAc-pentapeptide from UDP-MurNAc-pentapeptide onto the lipid carrier undecaprenyl phosphate, yielding undecaprenyl-pyrophosphoryl-MurNAc-pentapeptide, known as lipid I. The sequence is that of Phospho-N-acetylmuramoyl-pentapeptide-transferase from Caldicellulosiruptor bescii (strain ATCC BAA-1888 / DSM 6725 / KCTC 15123 / Z-1320) (Anaerocellum thermophilum).